We begin with the raw amino-acid sequence, 622 residues long: Chaperone protein HscA homolog (622 aa).

The protein belongs to the heat shock protein 70 family.

In terms of biological role, chaperone involved in the maturation of iron-sulfur cluster-containing proteins. Has a low intrinsic ATPase activity which is markedly stimulated by HscB. This is Chaperone protein HscA homolog from Burkholderia orbicola (strain MC0-3).